The primary structure comprises 287 residues: Orotidine 5'-phosphate decarboxylase (287 aa).

K95 functions as the Proton donor in the catalytic mechanism.

It belongs to the OMP decarboxylase family. Type 2 subfamily.

The enzyme catalyses orotidine 5'-phosphate + H(+) = UMP + CO2. It participates in pyrimidine metabolism; UMP biosynthesis via de novo pathway; UMP from orotate: step 2/2. This is Orotidine 5'-phosphate decarboxylase from Albidiferax ferrireducens (strain ATCC BAA-621 / DSM 15236 / T118) (Rhodoferax ferrireducens).